The chain runs to 110 residues: RNA polymerase II transcriptional coactivator (110 aa).

Positions 1 to 50 are disordered; that stretch reads MPKTKKKDSSSDSDSGPDDRIKPASKKAKESDAPNSDPKDSGENGATSWT. Residues 17-42 are compositionally biased toward basic and acidic residues; that stretch reads PDDRIKPASKKAKESDAPNSDPKDSG.

Belongs to the transcriptional coactivator PC4 family.

The protein localises to the nucleus. Functionally, general coactivator that functions cooperatively with TAFs and mediates functional interactions between upstream activators and the general transcriptional machinery. Binds single-stranded DNA. Binds specifically to the NssBF element, a short nucleotide sequence of the 1731 retrotransposon, to repress promoter activity. In Drosophila melanogaster (Fruit fly), this protein is RNA polymerase II transcriptional coactivator (Ssb-c31a).